The sequence spans 113 residues: Pancreatic progenitor cell differentiation and proliferation factor A (113 aa).

This sequence belongs to the PPDPF family.

Functionally, probable regulator of exocrine pancreas development. The sequence is that of Pancreatic progenitor cell differentiation and proliferation factor A (ppdpf-a) from Xenopus laevis (African clawed frog).